We begin with the raw amino-acid sequence, 459 residues long: Arginine biosynthesis bifunctional protein ArgJ, mitochondrial (459 aa).

Residues threonine 187, lysine 216, threonine 227, glutamate 314, asparagine 454, and threonine 459 each coordinate substrate. The Nucleophile role is filled by threonine 227.

The protein belongs to the ArgJ family. As to quaternary structure, heterodimer of an alpha and a beta chain. Post-translationally, the alpha and beta chains are autoproteolytically processed from a single precursor protein within the mitochondrion.

Its subcellular location is the mitochondrion matrix. It carries out the reaction N(2)-acetyl-L-ornithine + L-glutamate = N-acetyl-L-glutamate + L-ornithine. It catalyses the reaction L-glutamate + acetyl-CoA = N-acetyl-L-glutamate + CoA + H(+). The protein operates within amino-acid biosynthesis; L-arginine biosynthesis; L-ornithine and N-acetyl-L-glutamate from L-glutamate and N(2)-acetyl-L-ornithine (cyclic): step 1/1. It functions in the pathway amino-acid biosynthesis; L-arginine biosynthesis; N(2)-acetyl-L-ornithine from L-glutamate: step 1/4. Functionally, catalyzes two activities which are involved in the cyclic version of arginine biosynthesis: the synthesis of acetylglutamate from glutamate and acetyl-CoA, and of ornithine by transacetylation between acetylornithine and glutamate. The polypeptide is Arginine biosynthesis bifunctional protein ArgJ, mitochondrial (Uncinocarpus reesii (strain UAMH 1704)).